The sequence spans 120 residues: Anti-adapter protein IraM (120 aa).

This sequence belongs to the IraM/RssC family.

It is found in the cytoplasm. Involved in the stabilization of the sigma stress factor RpoS. The chain is Anti-adapter protein IraM from Salmonella choleraesuis (strain SC-B67).